We begin with the raw amino-acid sequence, 1178 residues long: Zinc finger CCHC domain-containing protein 2 (1178 aa).

Disordered regions lie at residues 1–90 (MLRM…GPSA), 207–249 (AARG…RVGG), 557–683 (VTSA…SVNQ), and 936–986 (LSTA…SDST). Residues 43 to 67 (PPPPPPPPAGPSRGPLPPPPPPRGL) show a composition bias toward pro residues. A compositionally biased stretch (gly residues) spans 75–88 (AAAGAGMPGGGGGP). Residues 208 to 219 (ARGEGSRGGAED) are compositionally biased toward basic and acidic residues. Over residues 220–229 (ERGEDGDGEQ) the composition is skewed to acidic residues. Position 236 is a phosphoserine (Ser236). Residues 580–594 (PQTEKEKIKKTDNRL) show a composition bias toward basic and acidic residues. The segment covering 595-607 (NSRINGIRLSTPQ) has biased composition (polar residues). Residues 632 to 641 (SSESYSSPSS) are compositionally biased toward low complexity. Positions 642-661 (PRHDGRESFESEEEKDRDTD) are enriched in basic and acidic residues. Positions 665-683 (EDSGNPSTTRFTGYGSVNQ) are enriched in polar residues. A compositionally biased stretch (low complexity) spans 937 to 948 (STAATSPQPASA). The span at 959-973 (PAVPTHTPGPAPSPS) shows a compositional bias: pro residues. A compositionally biased stretch (polar residues) spans 974–986 (PALTHSTAQSDST). Residues 1131–1148 (VSCYNCGVSGHYAQDCKQ) form a CCHC-type zinc finger.

This is Zinc finger CCHC domain-containing protein 2 from Homo sapiens (Human).